The sequence spans 550 residues: Cell pattern formation-associated protein STUA (550 aa).

In terms of domain architecture, HTH APSES-type spans 86 to 192 (RVTATLWEDE…HNIGALLYHP (107 aa)). A DNA-binding region (H-T-H motif) is located at residues 120 to 141 (GTKLLNVAGMTRGRRDGILKSE). Over residues 246 to 266 (SLANGPQSLASTPQPLTNGSQ) the composition is skewed to polar residues. Disordered regions lie at residues 246–277 (SLAN…GMLK), 371–412 (HHQP…VKRR), 447–467 (KRRD…DHLN), and 527–550 (APVY…QSFG). Over residues 385 to 395 (RGRDEDDDVHR) the composition is skewed to basic and acidic residues. The nuclear localization domain stretch occupies residues 517–546 (TVAASPSYPSAPVYDTGARPPSAISAPRRQ).

Belongs to the EFG1/PHD1/stuA family.

It localises to the nucleus. Its function is as follows. Transcription factor that regulates asexual reproduction. Binds the StuA-response elements (StRE) with the consensus sequence 5'-(A/T)CGCG(T/A)N(A/C)-3' at the promoters of target genes. Differentially regulates the development of macroconidia, microconidia, and chlamydospores. Acts as a positive regulator for the development of macroconidia and as a negative regulator for the development of chlamydospores. Involved in microconidium formation specifically in infected plants. The protein is Cell pattern formation-associated protein STUA of Fusarium oxysporum (Fusarium vascular wilt).